Consider the following 325-residue polypeptide: D-xylose 1-dehydrogenase (NADP(+)) 2 (325 aa).

The signal sequence occupies residues 1–22 (MMFGILGTAGIGVKSVIPAVQA).

The protein belongs to the Gfo/Idh/MocA family. In terms of assembly, homotetramer.

It is found in the secreted. It catalyses the reaction D-xylose + NADP(+) = D-xylono-1,5-lactone + NADPH + H(+). In terms of biological role, NADP-dependent D-xylose dehydrogenase involved in the degradation of D-xylose, a major component of hemicelluloses such as xylan. Even if it shows D-xylose dehydrogenase activity, it is not essential for D-xylose degradation. The chain is D-xylose 1-dehydrogenase (NADP(+)) 2 from Haloferax volcanii (strain ATCC 29605 / DSM 3757 / JCM 8879 / NBRC 14742 / NCIMB 2012 / VKM B-1768 / DS2) (Halobacterium volcanii).